Consider the following 944-residue polypeptide: Leucine--tRNA ligase (944 aa).

A 'HIGH' region motif is present at residues 40–51 (PYPSGAGLHVGH). The 'KMSKS' region signature appears at 718–722 (KMSKS). Lysine 721 contributes to the ATP binding site.

This sequence belongs to the class-I aminoacyl-tRNA synthetase family.

Its subcellular location is the cytoplasm. It catalyses the reaction tRNA(Leu) + L-leucine + ATP = L-leucyl-tRNA(Leu) + AMP + diphosphate. In Bacteroides thetaiotaomicron (strain ATCC 29148 / DSM 2079 / JCM 5827 / CCUG 10774 / NCTC 10582 / VPI-5482 / E50), this protein is Leucine--tRNA ligase.